Reading from the N-terminus, the 265-residue chain is Glutamate racemase (265 aa).

Substrate is bound by residues 7–8 (DS) and 39–40 (YG). The active-site Proton donor/acceptor is Cys-70. A substrate-binding site is contributed by 71-72 (NT). The active-site Proton donor/acceptor is Cys-179. 180 to 181 (TH) is a binding site for substrate.

The protein belongs to the aspartate/glutamate racemases family.

It catalyses the reaction L-glutamate = D-glutamate. It functions in the pathway cell wall biogenesis; peptidoglycan biosynthesis. Provides the (R)-glutamate required for cell wall biosynthesis. This is Glutamate racemase from Gloeobacter violaceus (strain ATCC 29082 / PCC 7421).